The sequence spans 145 residues: Large ribosomal subunit protein uL13 (145 aa).

It belongs to the universal ribosomal protein uL13 family. In terms of assembly, part of the 50S ribosomal subunit.

Its function is as follows. This protein is one of the early assembly proteins of the 50S ribosomal subunit, although it is not seen to bind rRNA by itself. It is important during the early stages of 50S assembly. The sequence is that of Large ribosomal subunit protein uL13 from Bacillus pumilus (strain SAFR-032).